The chain runs to 138 residues: ATP synthase epsilon chain (138 aa).

Positions Lys-89–Lys-114 are enriched in basic and acidic residues. The segment at Lys-89–Gln-117 is disordered.

Belongs to the ATPase epsilon chain family. In terms of assembly, F-type ATPases have 2 components, CF(1) - the catalytic core - and CF(0) - the membrane proton channel. CF(1) has five subunits: alpha(3), beta(3), gamma(1), delta(1), epsilon(1). CF(0) has three main subunits: a, b and c.

The protein resides in the cellular thylakoid membrane. In terms of biological role, produces ATP from ADP in the presence of a proton gradient across the membrane. The polypeptide is ATP synthase epsilon chain (Gloeothece citriformis (strain PCC 7424) (Cyanothece sp. (strain PCC 7424))).